The following is a 224-amino-acid chain: DNA mismatch repair protein MutH (224 aa).

Belongs to the MutH family.

Its subcellular location is the cytoplasm. Its function is as follows. Sequence-specific endonuclease that cleaves unmethylated GATC sequences. It is involved in DNA mismatch repair. The polypeptide is DNA mismatch repair protein MutH (Histophilus somni (strain 129Pt) (Haemophilus somnus)).